Here is a 239-residue protein sequence, read N- to C-terminus: Ribosomal RNA small subunit methyltransferase G (239 aa).

S-adenosyl-L-methionine contacts are provided by residues Gly-77, Phe-82, 128–129 (AE), and Arg-147. The disordered stretch occupies residues 216–239 (EKKKQTPKKYPRKPGTPNKSPIEG).

The protein belongs to the methyltransferase superfamily. RNA methyltransferase RsmG family.

The protein resides in the cytoplasm. Specifically methylates the N7 position of guanine in position 535 of 16S rRNA. This is Ribosomal RNA small subunit methyltransferase G from Bacillus pumilus (strain SAFR-032).